Here is a 115-residue protein sequence, read N- to C-terminus: Large ribosomal subunit protein P2x (115 aa).

Positions 78–115 (GGGGGAASAAEPVAESKKKVEEVKDESSDDAGMMGLFD) are disordered. Basic and acidic residues predominate over residues 91–103 (AESKKKVEEVKDE). Ser104 and Ser105 each carry phosphoserine.

The protein belongs to the eukaryotic ribosomal protein P1/P2 family. P1 and P2 exist as dimers at the large ribosomal subunit.

Its function is as follows. Plays an important role in the elongation step of protein synthesis. The chain is Large ribosomal subunit protein P2x (RPP2C) from Arabidopsis thaliana (Mouse-ear cress).